A 415-amino-acid polypeptide reads, in one-letter code: Enolase (415 aa).

Residue Gln161 participates in (2R)-2-phosphoglycerate binding. Residue Glu203 is the Proton donor of the active site. Mg(2+)-binding residues include Asp240, Glu281, and Asp308. Lys333, Arg362, Ser363, and Lys384 together coordinate (2R)-2-phosphoglycerate. Lys333 acts as the Proton acceptor in catalysis.

The protein belongs to the enolase family. The cofactor is Mg(2+).

It is found in the cytoplasm. Its subcellular location is the secreted. The protein localises to the cell surface. The enzyme catalyses (2R)-2-phosphoglycerate = phosphoenolpyruvate + H2O. It participates in carbohydrate degradation; glycolysis; pyruvate from D-glyceraldehyde 3-phosphate: step 4/5. Functionally, catalyzes the reversible conversion of 2-phosphoglycerate (2-PG) into phosphoenolpyruvate (PEP). It is essential for the degradation of carbohydrates via glycolysis. The sequence is that of Enolase from Campylobacter hominis (strain ATCC BAA-381 / DSM 21671 / CCUG 45161 / LMG 19568 / NCTC 13146 / CH001A).